We begin with the raw amino-acid sequence, 144 residues long: uncharacterized protein (144 aa).

The chain crosses the membrane as a helical span at residues 72–90; that stretch reads VAIGTSLIVGAGVAMEVSV.

This sequence to yeast YCL21w.

The protein localises to the membrane. This is an uncharacterized protein from Saccharomyces cerevisiae (strain ATCC 204508 / S288c) (Baker's yeast).